Reading from the N-terminus, the 196-residue chain is Agamous-like MADS-box protein AGL27 (196 aa).

Residues 1–61 (MGRRKIEIKR…GKLYDSSSGD (61 aa)) form the MADS-box domain. The K-box domain occupies 80–170 (ALDLEEKIQN…ASQMGKNTLL (91 aa)). Residues 175–196 (ERGMFPGSSSGNKIPETLPLLN) form a disordered region.

In terms of assembly, interacts with AGL39, AGL97 and AGL74. In terms of tissue distribution, expressed in most plant tissues, embryo, seedlings, roots, leaves, stems, inflorescence, pollen, siliques and flowers.

The protein localises to the nucleus. Functionally, probable transcription factor involved in the negative regulation of flowering time in both long and short days, probably through the photoperiodic and vernalization pathways. Prevents premature flowering. The protein is Agamous-like MADS-box protein AGL27 (AGL27) of Arabidopsis thaliana (Mouse-ear cress).